We begin with the raw amino-acid sequence, 198 residues long: Dual specificity protein phosphatase 14 (198 aa).

The 142-residue stretch at 26-167 folds into the Tyrosine-protein phosphatase domain; the sequence is GIAQITSSLF…LIDYESQLFG (142 aa). Residue Cys111 is the Phosphocysteine intermediate of the active site.

The protein belongs to the protein-tyrosine phosphatase family. Non-receptor class dual specificity subfamily.

The enzyme catalyses O-phospho-L-tyrosyl-[protein] + H2O = L-tyrosyl-[protein] + phosphate. It carries out the reaction O-phospho-L-seryl-[protein] + H2O = L-seryl-[protein] + phosphate. It catalyses the reaction O-phospho-L-threonyl-[protein] + H2O = L-threonyl-[protein] + phosphate. In terms of biological role, involved in the inactivation of MAP kinases. Dephosphorylates ERK, JNK and p38 MAP-kinases. Plays a negative role in TCR signaling by dephosphorylating MAP3K7 adapter TAB1 leading to its inactivation. The polypeptide is Dual specificity protein phosphatase 14 (Dusp14) (Mus musculus (Mouse)).